The sequence spans 157 residues: MEALRRAHEATLRLLLCRPWASGAASRPKPRASEVLTQHLLQRRLPHWTSFCVPYSAVHNDQFGLSHFNWPVLGANYHVLRTGCFPFIKYHCSKAPWQDLAPQDRFFTALKVINLGIPTLLYGLGSWLFARVTETVHTSYGPITIYFLNKEDEGAMY.

Residues 1 to 23 form the signal peptide; it reads MEALRRAHEATLRLLLCRPWASG.

The protein resides in the secreted. This is an uncharacterized protein from Mus musculus (Mouse).